A 115-amino-acid polypeptide reads, in one-letter code: Large ribosomal subunit protein bL19 (115 aa).

It belongs to the bacterial ribosomal protein bL19 family.

In terms of biological role, this protein is located at the 30S-50S ribosomal subunit interface and may play a role in the structure and function of the aminoacyl-tRNA binding site. This Desulforapulum autotrophicum (strain ATCC 43914 / DSM 3382 / VKM B-1955 / HRM2) (Desulfobacterium autotrophicum) protein is Large ribosomal subunit protein bL19.